The sequence spans 128 residues: Fluoride-specific ion channel FluC (128 aa).

4 helical membrane passes run 4 to 24, 35 to 55, 67 to 87, and 99 to 119; these read VFLLIIGGAIGSALRFGVSTW, FGILSVNVIGSFLIGFCWSIA, FLFTGLFGGFTTFSSFALDTM, and LLNVLASNILGLIAVFLGIIL. Residues Gly74 and Thr77 each contribute to the Na(+) site.

This sequence belongs to the fluoride channel Fluc/FEX (TC 1.A.43) family.

It localises to the cell inner membrane. The enzyme catalyses fluoride(in) = fluoride(out). Na(+) is not transported, but it plays an essential structural role and its presence is essential for fluoride channel function. Functionally, fluoride-specific ion channel. Important for reducing fluoride concentration in the cell, thus reducing its toxicity. The chain is Fluoride-specific ion channel FluC from Parabacteroides distasonis (strain ATCC 8503 / DSM 20701 / CIP 104284 / JCM 5825 / NCTC 11152).